The chain runs to 369 residues: MSNLLRTPLFDLIVQQKAKLTEFSGWEMPVQFSKLKDEHQAVRTDVGMFDISHMGKFALQGTELLKSLQFLVPSDLERLQPGQAQYTVLLNPQGGIIDDIIVYYQGITETGEQRANIIVNAGTTEKDKTWLLSHLDTQKITFKDLSGEKVLIAVQGPQSVAKLQAFVQEDLSQVGFFGHFEGTVLTKPAFIARTGYTGEDGFEVMVDPEVGQDLWRSLFQAGVTPCGLGARDTLRLEAAMCLYSQDIDDNTTPLEAGLNWLVHLDSKGDFIGRDILEKQKAQGVERRLVGLQMEGRHIARHGYPVLYEGKIVGEVTSGTLPPTVGKAIALAYVPRSLGKVGTPLEVEIRGQNCQAIVVKKPFYRSPNRF.

The protein belongs to the GcvT family. In terms of assembly, the glycine cleavage system is composed of four proteins: P, T, L and H.

The catalysed reaction is N(6)-[(R)-S(8)-aminomethyldihydrolipoyl]-L-lysyl-[protein] + (6S)-5,6,7,8-tetrahydrofolate = N(6)-[(R)-dihydrolipoyl]-L-lysyl-[protein] + (6R)-5,10-methylene-5,6,7,8-tetrahydrofolate + NH4(+). The glycine cleavage system catalyzes the degradation of glycine. The polypeptide is Aminomethyltransferase (Rippkaea orientalis (strain PCC 8801 / RF-1) (Cyanothece sp. (strain PCC 8801))).